The following is a 509-amino-acid chain: Dihydrolipoyl dehydrogenase, mitochondrial (509 aa).

The transit peptide at 1 to 35 (MQSWSRVYCSLAKRGHFSRISHGLQAVSAVPLRTY) directs the protein to the mitochondrion. Lys-66 carries the post-translational modification N6-acetyllysine; alternate. At Lys-66 the chain carries N6-succinyllysine; alternate. FAD is bound by residues 71–80 (EKNETLGGTC) and Lys-89. The cysteines at positions 80 and 85 are disulfide-linked. Residues Lys-104, Lys-122, Lys-132, and Lys-143 each carry the N6-acetyllysine; alternate modification. N6-succinyllysine; alternate is present on residues Lys-104, Lys-122, Lys-132, and Lys-143. FAD is bound at residue Gly-154. N6-succinyllysine occurs at positions 159 and 166. 183–185 (TGS) contributes to the FAD binding site. Residues 220-227 (GAGVIGVE) and Glu-243 contribute to the NAD(+) site. An N6-succinyllysine mark is found at Lys-273 and Lys-277. Val-278 contributes to the NAD(+) binding site. Phosphoserine is present on residues Ser-285 and Ser-297. Gly-314 is a binding site for NAD(+). An N6-acetyllysine modification is found at Lys-346. FAD-binding positions include Asp-355 and 361 to 364 (MLAH). N6-acetyllysine; alternate is present on Lys-410. The residue at position 410 (Lys-410) is an N6-succinyllysine; alternate. Residues Lys-417 and Lys-420 each carry the N6-acetyllysine modification. Position 430 is an N6-succinyllysine (Lys-430). His-487 functions as the Proton acceptor in the catalytic mechanism. A Phosphoserine modification is found at Ser-502. Lys-505 bears the N6-acetyllysine; alternate mark. N6-succinyllysine; alternate is present on Lys-505.

Belongs to the class-I pyridine nucleotide-disulfide oxidoreductase family. As to quaternary structure, homodimer. Part of the multimeric pyruvate dehydrogenase complex that contains multiple copies of pyruvate dehydrogenase (subunits PDHA (PDHA1 or PDHA2) and PDHB, E1), dihydrolipoamide acetyltransferase (DLAT, E2) and lipoamide dehydrogenase (DLD, E3). These subunits are bound to an inner core composed of about 48 DLAT and 12 PDHX molecules (by non covalent bonds). The 2-oxoglutarate dehydrogenase complex is composed of OGDH (2-oxoglutarate dehydrogenase; E1), DLST (dihydrolipoamide succinyltransferase; E2), DLD (dihydrolipoamide dehydrogenase; E3) and the assembly factor KGD4. It contains multiple copies of the three enzymatic components (E1, E2 and E3). In the nucleus, the 2-oxoglutarate dehydrogenase complex associates with KAT2A. Interacts with PDHX. FAD serves as cofactor. Tyrosine phosphorylated.

It localises to the mitochondrion matrix. The protein localises to the nucleus. The protein resides in the cell projection. It is found in the cilium. Its subcellular location is the flagellum. It localises to the cytoplasmic vesicle. The protein localises to the secretory vesicle. The protein resides in the acrosome. It carries out the reaction N(6)-[(R)-dihydrolipoyl]-L-lysyl-[protein] + NAD(+) = N(6)-[(R)-lipoyl]-L-lysyl-[protein] + NADH + H(+). Its function is as follows. Lipoamide dehydrogenase is a component of the glycine cleavage system as well as an E3 component of three alpha-ketoacid dehydrogenase complexes (pyruvate-, alpha-ketoglutarate-, and branched-chain amino acid-dehydrogenase complex). The 2-oxoglutarate dehydrogenase complex is mainly active in the mitochondrion. A fraction of the 2-oxoglutarate dehydrogenase complex also localizes in the nucleus and is required for lysine succinylation of histones: associates with KAT2A on chromatin and provides succinyl-CoA to histone succinyltransferase KAT2A. In monomeric form may have additional moonlighting function as serine protease. Involved in the hyperactivation of spermatazoa during capacitation and in the spermatazoal acrosome reaction. The polypeptide is Dihydrolipoyl dehydrogenase, mitochondrial (DLD) (Canis lupus familiaris (Dog)).